A 429-amino-acid polypeptide reads, in one-letter code: Alanine aminotransferase (429 aa).

L-alanine-binding residues include glycine 65 and asparagine 204. Lysine 265 is subject to N6-(pyridoxal phosphate)lysine. Arginine 403 serves as a coordination point for L-alanine.

Belongs to the class-I pyridoxal-phosphate-dependent aminotransferase family. In terms of assembly, homodimer. Pyridoxal 5'-phosphate serves as cofactor.

The protein resides in the cytoplasm. It catalyses the reaction L-alanine + 2-oxoglutarate = pyruvate + L-glutamate. The chain is Alanine aminotransferase (aspC) from Mycobacterium bovis (strain ATCC BAA-935 / AF2122/97).